A 544-amino-acid polypeptide reads, in one-letter code: MFQNEVTFNEDMGSQVYLDYLYNFDPLKDFFELSPWQESSFEKQAKKLQEREANRRTFRNQLTLGLHNYHKKFTDNPKVYNTIELLNDPETMTVVTGQQPGIMTGPLFAIYKIITAIKLSKKLSKNLDANVIPIFWICSDDHDFQEVNWLKTVDHKGEQLLYEIHDDKEGFSIGDRDIKHKSQDLLDKLAQQLQDSPYYDKWMTLFSKTLEQSKTLADWTAAIILELFGNEGVLVIDPMKPVFRQLSKPIFSKALDLGEGLHNSIDSQTEKLNNRGYSGQVDLRVNHSGLFYYYQGIRSPLTVEGDQFLLANLGIEKSKEDLVRELESDPAKFSPNVTLWPVLQDFLLPSLAYVAGPGEISYFAQLKQIYEQFEIGMPVIYPRESYLLLESDVKSILEKYQIGPENIFYDWPTTRKRVFRELAPINTEKVLNDTCRTIKEEHEKFIQELSRLDEKIYDFEEKNFHLIYRQLYYLKEKGDQYFRRQQLQAQRDLDYSKIKIYPLDKLQEREYNIGEFLCKYDSSVLKKLLKTPLNPQKISVVDLE.

A coiled-coil region spans residues 431–463; the sequence is LNDTCRTIKEEHEKFIQELSRLDEKIYDFEEKN.

The protein belongs to the BshC family.

Involved in bacillithiol (BSH) biosynthesis. May catalyze the last step of the pathway, the addition of cysteine to glucosamine malate (GlcN-Mal) to generate BSH. In Natranaerobius thermophilus (strain ATCC BAA-1301 / DSM 18059 / JW/NM-WN-LF), this protein is Putative cysteine ligase BshC.